The following is a 643-amino-acid chain: Phosphoenolpyruvate carboxykinase [GTP] (643 aa).

Substrate contacts are provided by residues R102 and 253–255; that span reads YGG. Mn(2+) is bound by residues K262 and H282. S304 lines the substrate pocket. Residue 305–310 coordinates GTP; that stretch reads ACGKTN. C306 is a catalytic residue. D329 is a binding site for Mn(2+). Residue 422–424 coordinates substrate; the sequence is NSR. GTP is bound by residues R424, R455, and 548–551; that span reads YGDN.

This sequence belongs to the phosphoenolpyruvate carboxykinase [GTP] family. Monomer. It depends on Mn(2+) as a cofactor.

The enzyme catalyses oxaloacetate + GTP = phosphoenolpyruvate + GDP + CO2. Functionally, in parasitic nematodes PEPCK carboxylates phosphoenolpyruvate to oxaloacetate thus introducing the products of glycolysis to mitochondrial metabolism. In terms of biological role, catalyzes the conversion of oxaloacetate (OAA) to phosphoenolpyruvate (PEP), the rate-limiting step in the metabolic pathway that produces glucose from lactate and other precursors derived from the citric acid cycle. The chain is Phosphoenolpyruvate carboxykinase [GTP] (PEPCK) from Ascaris suum (Pig roundworm).